An 88-amino-acid polypeptide reads, in one-letter code: Small ribosomal subunit protein uS17 (88 aa).

The protein belongs to the universal ribosomal protein uS17 family. Part of the 30S ribosomal subunit.

One of the primary rRNA binding proteins, it binds specifically to the 5'-end of 16S ribosomal RNA. The chain is Small ribosomal subunit protein uS17 from Lactobacillus gasseri (strain ATCC 33323 / DSM 20243 / BCRC 14619 / CIP 102991 / JCM 1131 / KCTC 3163 / NCIMB 11718 / NCTC 13722 / AM63).